The following is an 85-amino-acid chain: Small ribosomal subunit protein bS16 (85 aa).

The protein belongs to the bacterial ribosomal protein bS16 family.

This chain is Small ribosomal subunit protein bS16, found in Neorickettsia sennetsu (strain ATCC VR-367 / Miyayama) (Ehrlichia sennetsu).